The primary structure comprises 86 residues: Large ribosomal subunit protein eL30 (86 aa).

Belongs to the eukaryotic ribosomal protein eL30 family.

This is Large ribosomal subunit protein eL30 (rpl30e) from Archaeoglobus fulgidus (strain ATCC 49558 / DSM 4304 / JCM 9628 / NBRC 100126 / VC-16).